The chain runs to 344 residues: Uroporphyrinogen decarboxylase (344 aa).

Substrate is bound by residues 23–27, aspartate 73, tyrosine 149, threonine 204, and histidine 321; that span reads RQAGR.

The protein belongs to the uroporphyrinogen decarboxylase family. In terms of assembly, homodimer.

The protein resides in the cytoplasm. The catalysed reaction is uroporphyrinogen III + 4 H(+) = coproporphyrinogen III + 4 CO2. It participates in porphyrin-containing compound metabolism; protoporphyrin-IX biosynthesis; coproporphyrinogen-III from 5-aminolevulinate: step 4/4. Functionally, catalyzes the decarboxylation of four acetate groups of uroporphyrinogen-III to yield coproporphyrinogen-III. This is Uroporphyrinogen decarboxylase from Francisella tularensis subsp. holarctica (strain LVS).